The primary structure comprises 438 residues: Chromosomal replication initiator protein DnaA (438 aa).

Residues 1–74 (MNEINKIWQK…SFYQITGSQV (74 aa)) form a domain I, interacts with DnaA modulators region. The domain II stretch occupies residues 74–100 (VEVKYIITGKEHETGLIEEKKQVIKKG). The interval 101–317 (NLNPKYTFDT…GSLIKLCAYT (217 aa)) is domain III, AAA+ region. ATP is bound by residues glycine 145, glycine 147, lysine 148, and threonine 149. The tract at residues 318–438 (SLTKVPISMD…DSIIKKVTGQ (121 aa)) is domain IV, binds dsDNA.

This sequence belongs to the DnaA family. As to quaternary structure, oligomerizes as a right-handed, spiral filament on DNA at oriC.

It is found in the cytoplasm. Plays an essential role in the initiation and regulation of chromosomal replication. ATP-DnaA binds to the origin of replication (oriC) to initiate formation of the DNA replication initiation complex once per cell cycle. Binds the DnaA box (a 9 base pair repeat at the origin) and separates the double-stranded (ds)DNA. Forms a right-handed helical filament on oriC DNA; dsDNA binds to the exterior of the filament while single-stranded (ss)DNA is stabiized in the filament's interior. The ATP-DnaA-oriC complex binds and stabilizes one strand of the AT-rich DNA unwinding element (DUE), permitting loading of DNA polymerase. After initiation quickly degrades to an ADP-DnaA complex that is not apt for DNA replication. Binds acidic phospholipids. This is Chromosomal replication initiator protein DnaA from Thermodesulfovibrio yellowstonii (strain ATCC 51303 / DSM 11347 / YP87).